The primary structure comprises 40 residues: Dolichyl-diphosphooligosaccharide--protein glycosyltransferase subunit 4 (40 aa).

Residues 1–4 are Lumenal-facing; it reads MITD. Residues 5–25 form a helical membrane-spanning segment; sequence VQLAIFSNVLGVFLFLLVVAY. Over 26 to 40 the chain is Cytoplasmic; sequence HYINANTGKSIIKSK.

Belongs to the OST4 family. Component of the oligosaccharyltransferase (OST) complex.

The protein resides in the endoplasmic reticulum membrane. Subunit of the oligosaccharyl transferase (OST) complex that catalyzes the initial transfer of a defined glycan (Glc(3)Man(9)GlcNAc(2) in eukaryotes) from the lipid carrier dolichol-pyrophosphate to an asparagine residue within an Asn-X-Ser/Thr consensus motif in nascent polypeptide chains, the first step in protein N-glycosylation. N-glycosylation occurs cotranslationally and the complex associates with the Sec61 complex at the channel-forming translocon complex that mediates protein translocation across the endoplasmic reticulum (ER). All subunits are required for a maximal enzyme activity. This chain is Dolichyl-diphosphooligosaccharide--protein glycosyltransferase subunit 4, found in Drosophila grimshawi (Hawaiian fruit fly).